The chain runs to 608 residues: Developmental regulatory protein wetA (608 aa).

Disordered regions lie at residues 54–88 (ADHHGHNPGMPTLADGLMLDHPSESTASASSGVST), 102–125 (VDATVPSQPGSSAAPGASHDVDPR), 146–186 (VSMS…MTRK), 202–226 (SKLRKPRKPIAMDRPGSPTMDNPPR), 309–352 (WPHQ…HAVP), 447–544 (AQTY…GDIG), and 556–576 (LMTGVAPSGSSKTKARREREA). Low complexity-rich tracts occupy residues 77 to 88 (ESTASASSGVST), 107 to 119 (PSQPGSSAAPGAS), and 163 to 175 (SSPGRRVPVSQPS). Positions 313–338 (QHPHPHPHPHHPQAHTHPHPHPHPHP) are enriched in basic residues. 2 stretches are compositionally biased toward low complexity: residues 339–350 (HQQAVAGHPQHA) and 502–517 (SSNGSVASARSASGRG).

It belongs to the wetA family.

Its function is as follows. AbaA and wetA are pivotal regulators of conidiophore development and conidium maturation. They act individually and together to regulate their own expression and that of numerous other sporulation-specific genes. Functions to maintain conidial dormancy by suppressing microcycle conidiation. The chain is Developmental regulatory protein wetA from Gibberella zeae (strain ATCC MYA-4620 / CBS 123657 / FGSC 9075 / NRRL 31084 / PH-1) (Wheat head blight fungus).